A 652-amino-acid chain; its full sequence is NADH-ubiquinone oxidoreductase chain 5 (652 aa).

Helical transmembrane passes span 1–21 (MYLS…FLGR), 30–50 (LITC…FIEV), 72–92 (IIWG…VLII), 119–139 (LFTF…MFVG), 140–160 (WEGV…RIAA), 177–197 (FLTI…YSTV), 200–220 (LAPY…LIGA), 241–261 (TPVS…YLLM), 274–294 (LLLC…IGLF), 301–319 (VIAY…AIGL), 331–351 (NHAF…HAVA), 365–385 (FLPL…AFPF), 403–423 (FSFS…FTTL), 454–474 (LFLT…GFIT), 505–525 (FAVP…FSII), and 619–639 (LYIL…FNFL).

The protein belongs to the complex I subunit 5 family.

It is found in the mitochondrion inner membrane. It carries out the reaction a ubiquinone + NADH + 5 H(+)(in) = a ubiquinol + NAD(+) + 4 H(+)(out). Functionally, core subunit of the mitochondrial membrane respiratory chain NADH dehydrogenase (Complex I) that is believed to belong to the minimal assembly required for catalysis. Complex I functions in the transfer of electrons from NADH to the respiratory chain. The immediate electron acceptor for the enzyme is believed to be ubiquinone. The protein is NADH-ubiquinone oxidoreductase chain 5 (ND5) of Podospora anserina (strain S / ATCC MYA-4624 / DSM 980 / FGSC 10383) (Pleurage anserina).